The chain runs to 173 residues: Archaemetzincin (173 aa).

Histidine 130 lines the Zn(2+) pocket. Glutamate 131 serves as the catalytic Proton acceptor. Residues histidine 134, histidine 140, cysteine 141, cysteine 146, cysteine 165, and cysteine 168 each contribute to the Zn(2+) site.

It belongs to the peptidase M54 family. Monomer. Requires Zn(2+) as cofactor.

Functionally, probable zinc metalloprotease whose natural substrate is unknown. This is Archaemetzincin from Halobacterium salinarum (strain ATCC 29341 / DSM 671 / R1).